The sequence spans 176 residues: ATP-dependent protease subunit HslV (176 aa).

Residue T2 is part of the active site. Na(+)-binding residues include G157, C160, and T163.

The protein belongs to the peptidase T1B family. HslV subfamily. In terms of assembly, a double ring-shaped homohexamer of HslV is capped on each side by a ring-shaped HslU homohexamer. The assembly of the HslU/HslV complex is dependent on binding of ATP.

The protein resides in the cytoplasm. The catalysed reaction is ATP-dependent cleavage of peptide bonds with broad specificity.. Its activity is regulated as follows. Allosterically activated by HslU binding. Its function is as follows. Protease subunit of a proteasome-like degradation complex believed to be a general protein degrading machinery. The chain is ATP-dependent protease subunit HslV from Pseudomonas savastanoi pv. phaseolicola (strain 1448A / Race 6) (Pseudomonas syringae pv. phaseolicola (strain 1448A / Race 6)).